The primary structure comprises 257 residues: Small ribosomal subunit protein uS2 (257 aa).

Belongs to the universal ribosomal protein uS2 family.

The sequence is that of Small ribosomal subunit protein uS2 from Bartonella quintana (strain Toulouse) (Rochalimaea quintana).